Reading from the N-terminus, the 384-residue chain is BarH-like 2 homeobox protein (384 aa).

Disordered regions lie at residues 1-134, 154-237, and 364-384; these read MTAM…APRT, CAPY…TAFS, and PGGQ…PHPR. Residues 119 to 134 are compositionally biased toward low complexity; the sequence is QSAAQQLGSAAAAPRT. Residues 177 to 217 are compositionally biased toward basic and acidic residues; it reads ESFRPKLEQEDSKTKLDKREDSQSDIKCHGTKEEGDREITS. Residues 229-288 constitute a DNA-binding region (homeobox); that stretch reads PRKARTAFSDHQLNQLERSFERQKYLSVQDRMDLAAALNLTDTQVKTWYQNRRTKWKRQT.

This sequence belongs to the BAR homeobox family. As to expression, expressed in the ganglion cell layer of the retina in the eye and in the ventral zone of the dorsal thalamus of the CNS.

It localises to the nucleus. Functionally, potential regulator of neural basic helix-loop-helix genes. It may down-regulate expression of ASCL1 and, within the thalamus, up-regulate NGN2, thereby regulating distinct patterns of neuronal differentiation. The chain is BarH-like 2 homeobox protein (Barhl2) from Rattus norvegicus (Rat).